The sequence spans 47 residues: Small, acid-soluble spore protein N (47 aa).

Over residues 1–12 the composition is skewed to basic residues; it reads MSNPKGSRKHFV. Positions 1 to 47 are disordered; that stretch reads MSNPKGSRKHFVPNHIGTQPRAAGGNKGKQMQDQSGQHAQVIQTKGE. The span at 29–47 shows a compositional bias: polar residues; the sequence is KQMQDQSGQHAQVIQTKGE.

The protein belongs to the SspN family.

The protein localises to the spore core. This is Small, acid-soluble spore protein N from Geobacillus kaustophilus (strain HTA426).